The primary structure comprises 467 residues: 3-isopropylmalate dehydratase large subunit (467 aa).

[4Fe-4S] cluster contacts are provided by Cys-349, Cys-409, and Cys-412.

The protein belongs to the aconitase/IPM isomerase family. LeuC type 1 subfamily. In terms of assembly, heterodimer of LeuC and LeuD. Requires [4Fe-4S] cluster as cofactor.

The enzyme catalyses (2R,3S)-3-isopropylmalate = (2S)-2-isopropylmalate. The protein operates within amino-acid biosynthesis; L-leucine biosynthesis; L-leucine from 3-methyl-2-oxobutanoate: step 2/4. Functionally, catalyzes the isomerization between 2-isopropylmalate and 3-isopropylmalate, via the formation of 2-isopropylmaleate. The chain is 3-isopropylmalate dehydratase large subunit from Vibrio cholerae serotype O1 (strain ATCC 39541 / Classical Ogawa 395 / O395).